A 72-amino-acid polypeptide reads, in one-letter code: MAKDDVIEIDGKVVEALPNATFRVELDNGHIVLCHIAGKMRMHYIKILPGDKVKVELTPYSLDKGRITFRYK.

The S1-like domain occupies 1-72; sequence MAKDDVIEID…DKGRITFRYK (72 aa).

The protein belongs to the IF-1 family. Component of the 30S ribosomal translation pre-initiation complex which assembles on the 30S ribosome in the order IF-2 and IF-3, IF-1 and N-formylmethionyl-tRNA(fMet); mRNA recruitment can occur at any time during PIC assembly.

It is found in the cytoplasm. One of the essential components for the initiation of protein synthesis. Stabilizes the binding of IF-2 and IF-3 on the 30S subunit to which N-formylmethionyl-tRNA(fMet) subsequently binds. Helps modulate mRNA selection, yielding the 30S pre-initiation complex (PIC). Upon addition of the 50S ribosomal subunit IF-1, IF-2 and IF-3 are released leaving the mature 70S translation initiation complex. In Sulfurovum sp. (strain NBC37-1), this protein is Translation initiation factor IF-1.